A 211-amino-acid chain; its full sequence is MADS-box protein AGL72 (211 aa).

In terms of domain architecture, MADS-box spans 1-61; sequence MVRGKIEIKK…GRLYEFASSD (61 aa). One can recognise a K-box domain in the interval 88-187; sequence VQGLKKEMVT…LCQVGERPMG (100 aa).

Its subcellular location is the nucleus. MADS-box transcription factor that acts with AGL42 and AGL71 in the control of flowering time. Promotes flowering at the shoot apical and axillary meristems. Seems to act through a gibberellin-dependent pathway. Interacts genetically with SOC1 and its expression is directly regulated by SOC1. The polypeptide is MADS-box protein AGL72 (AGL72) (Arabidopsis thaliana (Mouse-ear cress)).